A 211-amino-acid chain; its full sequence is 2,3-bisphosphoglycerate-dependent phosphoglycerate mutase (211 aa).

Residues 9–16 (RHGQSDWN), 22–23 (TG), Arg61, 88–91 (ERDY), Lys99, 115–116 (RR), and 159–160 (GN) each bind substrate. His10 acts as the Tele-phosphohistidine intermediate in catalysis. Glu88 serves as the catalytic Proton donor/acceptor.

Belongs to the phosphoglycerate mutase family. BPG-dependent PGAM subfamily. In terms of assembly, homodimer.

The catalysed reaction is (2R)-2-phosphoglycerate = (2R)-3-phosphoglycerate. It participates in carbohydrate degradation; glycolysis; pyruvate from D-glyceraldehyde 3-phosphate: step 3/5. In terms of biological role, catalyzes the interconversion of 2-phosphoglycerate and 3-phosphoglycerate. In Allorhizobium ampelinum (strain ATCC BAA-846 / DSM 112012 / S4) (Agrobacterium vitis (strain S4)), this protein is 2,3-bisphosphoglycerate-dependent phosphoglycerate mutase.